The chain runs to 924 residues: Translation initiation factor IF-2 (924 aa).

Residues 118–325 (PSTAHREELA…QAPVVGGVRL (208 aa)) form a disordered region. Composition is skewed to pro residues over residues 150 to 173 (APHP…PGGR) and 192 to 201 (IPRPPAPRPS). The segment covering 202-212 (ASPSSMSPRPG) has biased composition (low complexity). Residues 229 to 295 (RPGGGRPGAP…GAAGAFGRPG (67 aa)) are compositionally biased toward gly residues. Residues 299 to 308 (RRGRKSKRQK) show a composition bias toward basic residues. Positions 420-591 (VRPPVVTVMG…AVLLTADAAL (172 aa)) constitute a tr-type G domain. Residues 429 to 436 (GHVDHGKT) are G1. A GTP-binding site is contributed by 429–436 (GHVDHGKT). A G2 region spans residues 454-458 (GITQH). Positions 479-482 (DTPG) are G3. Residues 479–483 (DTPGH) and 533–536 (NKID) each bind GTP. Residues 533-536 (NKID) are G4. Residues 569–571 (SAK) are G5.

Belongs to the TRAFAC class translation factor GTPase superfamily. Classic translation factor GTPase family. IF-2 subfamily.

It localises to the cytoplasm. In terms of biological role, one of the essential components for the initiation of protein synthesis. Protects formylmethionyl-tRNA from spontaneous hydrolysis and promotes its binding to the 30S ribosomal subunits. Also involved in the hydrolysis of GTP during the formation of the 70S ribosomal complex. The chain is Translation initiation factor IF-2 from Mycobacterium leprae (strain Br4923).